The chain runs to 2197 residues: Protein Ycf2 (2197 aa).

1539 to 1546 (GSIGTGRS) lines the ATP pocket.

It belongs to the Ycf2 family.

Its subcellular location is the plastid. It localises to the chloroplast stroma. Its function is as follows. Probable ATPase of unknown function. Its presence in a non-photosynthetic plant (Epifagus virginiana) and experiments in tobacco indicate that it has an essential function which is probably not related to photosynthesis. The sequence is that of Protein Ycf2 from Ipomoea purpurea (Common morning glory).